The following is a 365-amino-acid chain: MKFNDFLDDLVNYEAGKPIELVVREFGIDAKDVIKLASNENPFGTSKRVEEALKEVAKNAHLYPDDSYFELKEGLAKKFGVTSKKLIIGSGSDQIIEFALHAKANRQSGVLMAGVTFAMYEIYAKQTGAKIYRTKSVEHNLSEFLEIYNAHKDEISVIFLCLPNNPLGECIDADEVYKFIKNIDENTLVVLDCAYNEFAKFKDSKKEIKPSEVVKFKNAIYLGTFSKAYALGGMRVGYGVANEEIIGALSKLRAPFNITTPSLRAAIVALGDDEFVQKTMQNNFEQMKRYEDFAEQNGIEFIPSYTNFITFKFNEPKSSQICEKMLKKGIILRDLKSYALNAVRITIGQAWQNDRVFEELEQILK.

Residue Lys-227 is modified to N6-(pyridoxal phosphate)lysine.

Belongs to the class-II pyridoxal-phosphate-dependent aminotransferase family. Histidinol-phosphate aminotransferase subfamily. In terms of assembly, homodimer. Requires pyridoxal 5'-phosphate as cofactor.

It catalyses the reaction L-histidinol phosphate + 2-oxoglutarate = 3-(imidazol-4-yl)-2-oxopropyl phosphate + L-glutamate. It participates in amino-acid biosynthesis; L-histidine biosynthesis; L-histidine from 5-phospho-alpha-D-ribose 1-diphosphate: step 7/9. In Campylobacter concisus (strain 13826), this protein is Histidinol-phosphate aminotransferase.